Consider the following 442-residue polypeptide: tRNA modification GTPase MnmE (442 aa).

(6S)-5-formyl-5,6,7,8-tetrahydrofolate-binding residues include Arg-24, Glu-82, and Lys-120. Residues 217–367 (GLHIVITGEP…LISLIKEKAE (151 aa)) form the TrmE-type G domain. Residues 227 to 232 (NVGKST), 246 to 252 (SEYAGTT), and 271 to 274 (DTAG) contribute to the GTP site. 2 residues coordinate Mg(2+): Ser-231 and Thr-252. Lys-442 lines the (6S)-5-formyl-5,6,7,8-tetrahydrofolate pocket.

Belongs to the TRAFAC class TrmE-Era-EngA-EngB-Septin-like GTPase superfamily. TrmE GTPase family. Homodimer. Heterotetramer of two MnmE and two MnmG subunits. K(+) serves as cofactor.

It localises to the cytoplasm. Exhibits a very high intrinsic GTPase hydrolysis rate. Involved in the addition of a carboxymethylaminomethyl (cmnm) group at the wobble position (U34) of certain tRNAs, forming tRNA-cmnm(5)s(2)U34. The sequence is that of tRNA modification GTPase MnmE from Wolbachia sp. subsp. Drosophila simulans (strain wRi).